The following is a 509-amino-acid chain: Cardiolipin synthase 1 (509 aa).

The next 3 membrane-spanning stretches (helical) occupy residues P4–T24, Y30–I50, and L59–F79. 2 consecutive PLD phosphodiesterase domains span residues V238–Y265 and K422–S449. Catalysis depends on residues H243, K245, D250, H427, K429, and D434.

Belongs to the phospholipase D family. Cardiolipin synthase subfamily.

It is found in the cell membrane. It carries out the reaction 2 a 1,2-diacyl-sn-glycero-3-phospho-(1'-sn-glycerol) = a cardiolipin + glycerol. Its function is as follows. Catalyzes the reversible phosphatidyl group transfer from one phosphatidylglycerol molecule to another to form cardiolipin (CL) (diphosphatidylglycerol) and glycerol. The chain is Cardiolipin synthase 1 (cls1) from Bacillus anthracis.